The following is a 188-amino-acid chain: dCTP deaminase (188 aa).

DCTP-binding positions include 111–116, 135–137, glutamine 156, tyrosine 170, and glutamine 180; these read KSTYAR and TLE. Glutamate 137 functions as the Proton donor/acceptor in the catalytic mechanism.

The protein belongs to the dCTP deaminase family. In terms of assembly, homotrimer.

It catalyses the reaction dCTP + H2O + H(+) = dUTP + NH4(+). The protein operates within pyrimidine metabolism; dUMP biosynthesis; dUMP from dCTP (dUTP route): step 1/2. Catalyzes the deamination of dCTP to dUTP. The protein is dCTP deaminase of Laribacter hongkongensis (strain HLHK9).